The following is a 76-amino-acid chain: Putative protein StbC (76 aa).

The sequence is that of Putative protein StbC (stbC) from Escherichia coli.